Consider the following 214-residue polypeptide: Putative ras-related protein Rab-5B (214 aa).

GTP is bound at residue 56–63 (GEMNTGKT). The Effector region signature appears at 77–85 (TDSTIGAAF). Residues 103 to 107 (DTAGQ) and 161 to 164 (NKVD) contribute to the GTP site.

The protein belongs to the small GTPase superfamily. Rab family. In terms of processing, this sequence lacks the C-terminal cysteine motifs subject to isoprenylation in other Rab proteins.

The sequence is that of Putative ras-related protein Rab-5B (rab5B) from Dictyostelium discoideum (Social amoeba).